The primary structure comprises 201 residues: MASGDDSPIFEDDESPLCSLEKMTDLVAVWDVALSDGVHKIEFEHGTTSGKRVVYVDGKEEIRREWMFKLVGKETFFVGAAKTKATINIDAISGFAYEYTLEIDGKSLKKYMENRSKTTNTWVLHLDGEELRVVLEKDTMDVWCNGQRMETAGEFVDDGTETHFSVGNHDCYIKAVSSGKRREGIIHTLIVDNREIPELTQ.

The protein belongs to the FAIM1 family.

It is found in the cytoplasm. Plays a role as an inducible effector molecule that mediates Fas resistance produced by surface Ig engagement in B cells. The polypeptide is Fas apoptotic inhibitory molecule 1 (Faim) (Rattus norvegicus (Rat)).